The chain runs to 251 residues: Ribosomal RNA small subunit methyltransferase G (251 aa).

Residues Gly74, Phe79, 125–126, and Arg144 each bind S-adenosyl-L-methionine; that span reads AE. The tract at residues 224–251 is disordered; sequence RPAGLPTQHPLGAIEGAPRVESEEPEEP.

The protein belongs to the methyltransferase superfamily. RNA methyltransferase RsmG family.

The protein resides in the cytoplasm. Specifically methylates the N7 position of a guanine in 16S rRNA. This is Ribosomal RNA small subunit methyltransferase G from Gloeobacter violaceus (strain ATCC 29082 / PCC 7421).